The sequence spans 60 residues: uncharacterized protein (60 aa).

This is an uncharacterized protein from Autographa californica nuclear polyhedrosis virus (AcMNPV).